Consider the following 119-residue polypeptide: U9-hexatoxin-Hi1 (119 aa).

Positions Met-1–Ala-17 are cleaved as a signal peptide. Residues Ser-18 to Arg-53 constitute a propeptide that is removed on maturation. 4 disulfide bridges follow: Cys-55–Cys-73, Cys-66–Cys-79, Cys-70–Cys-117, and Cys-72–Cys-88.

It belongs to the neurotoxin 03 (Tx2) family. 03 subfamily. As to expression, expressed by the venom gland.

The protein localises to the secreted. In terms of biological role, probable ion channel inhibitor. This is U9-hexatoxin-Hi1 from Hadronyche infensa (Fraser island funnel-web spider).